The following is a 505-amino-acid chain: ATP synthase subunit alpha, chloroplastic (505 aa).

170-177 contributes to the ATP binding site; sequence GDRQTGKT.

Belongs to the ATPase alpha/beta chains family. F-type ATPases have 2 components, CF(1) - the catalytic core - and CF(0) - the membrane proton channel. CF(1) has five subunits: alpha(3), beta(3), gamma(1), delta(1), epsilon(1). CF(0) has four main subunits: a, b, b' and c.

It localises to the plastid. Its subcellular location is the chloroplast thylakoid membrane. It catalyses the reaction ATP + H2O + 4 H(+)(in) = ADP + phosphate + 5 H(+)(out). Its function is as follows. Produces ATP from ADP in the presence of a proton gradient across the membrane. The alpha chain is a regulatory subunit. In Phaeodactylum tricornutum (strain CCAP 1055/1), this protein is ATP synthase subunit alpha, chloroplastic.